The chain runs to 557 residues: Aerobic glycerol-3-phosphate dehydrogenase (557 aa).

21-49 (DVVIIGGGITGAGIALDASQRGMKVALVE) serves as a coordination point for FAD.

The protein belongs to the FAD-dependent glycerol-3-phosphate dehydrogenase family. Requires FAD as cofactor.

It localises to the cytoplasm. The enzyme catalyses a quinone + sn-glycerol 3-phosphate = dihydroxyacetone phosphate + a quinol. Its pathway is polyol metabolism; glycerol degradation via glycerol kinase pathway; glycerone phosphate from sn-glycerol 3-phosphate (aerobic route): step 1/1. This chain is Aerobic glycerol-3-phosphate dehydrogenase (glpD), found in Staphylococcus haemolyticus (strain JCSC1435).